The following is a 396-amino-acid chain: Ribosomal RNA large subunit methyltransferase I (396 aa).

Positions 2 to 81 (SVRLVLTKGR…ETIDIAFFTR (80 aa)) constitute a PUA domain.

It belongs to the methyltransferase superfamily. RlmI family.

It localises to the cytoplasm. The enzyme catalyses cytidine(1962) in 23S rRNA + S-adenosyl-L-methionine = 5-methylcytidine(1962) in 23S rRNA + S-adenosyl-L-homocysteine + H(+). In terms of biological role, specifically methylates the cytosine at position 1962 (m5C1962) of 23S rRNA. The chain is Ribosomal RNA large subunit methyltransferase I from Enterobacter sp. (strain 638).